The chain runs to 419 residues: D-inositol 3-phosphate glycosyltransferase (419 aa).

Residue His-9 coordinates 1D-myo-inositol 3-phosphate. Residues 15 to 16 (QP) and Gly-23 each bind UDP-N-acetyl-alpha-D-glucosamine. 1D-myo-inositol 3-phosphate-binding positions include 20 to 25 (DAGGMN), Lys-78, Tyr-110, Thr-134, and Arg-154. The UDP-N-acetyl-alpha-D-glucosamine site is built by Arg-231, Lys-236, and Arg-295. The Mg(2+) site is built by Tyr-304, Arg-305, and Ala-307. 2 residues coordinate UDP-N-acetyl-alpha-D-glucosamine: Glu-317 and Glu-325. Thr-331 is a Mg(2+) binding site.

Belongs to the glycosyltransferase group 1 family. MshA subfamily. Homodimer.

The enzyme catalyses 1D-myo-inositol 3-phosphate + UDP-N-acetyl-alpha-D-glucosamine = 1D-myo-inositol 2-acetamido-2-deoxy-alpha-D-glucopyranoside 3-phosphate + UDP + H(+). In terms of biological role, catalyzes the transfer of a N-acetyl-glucosamine moiety to 1D-myo-inositol 3-phosphate to produce 1D-myo-inositol 2-acetamido-2-deoxy-glucopyranoside 3-phosphate in the mycothiol biosynthesis pathway. The sequence is that of D-inositol 3-phosphate glycosyltransferase from Corynebacterium jeikeium (strain K411).